The chain runs to 261 residues: Zinc import ATP-binding protein ZnuC (261 aa).

The ABC transporter domain maps to 6–221; that stretch reads IRLEQVGVTF…PAFVELFGKN (216 aa). Residue 38-45 participates in ATP binding; the sequence is GPNGAGKT.

This sequence belongs to the ABC transporter superfamily. Zinc importer (TC 3.A.1.15.5) family. As to quaternary structure, the complex is composed of two ATP-binding proteins (ZnuC), two transmembrane proteins (ZnuB) and a solute-binding protein (ZnuA).

It is found in the cell inner membrane. The catalysed reaction is Zn(2+)(out) + ATP(in) + H2O(in) = Zn(2+)(in) + ADP(in) + phosphate(in) + H(+)(in). In terms of biological role, part of the ABC transporter complex ZnuABC involved in zinc import. Responsible for energy coupling to the transport system. In Pseudomonas fluorescens (strain ATCC BAA-477 / NRRL B-23932 / Pf-5), this protein is Zinc import ATP-binding protein ZnuC.